Here is a 203-residue protein sequence, read N- to C-terminus: Urease accessory protein UreG (203 aa).

GTP is bound at residue 14-21; that stretch reads GPVGSGKT.

The protein belongs to the SIMIBI class G3E GTPase family. UreG subfamily. As to quaternary structure, homodimer. UreD, UreF and UreG form a complex that acts as a GTP-hydrolysis-dependent molecular chaperone, activating the urease apoprotein by helping to assemble the nickel containing metallocenter of UreC. The UreE protein probably delivers the nickel.

It is found in the cytoplasm. Facilitates the functional incorporation of the urease nickel metallocenter. This process requires GTP hydrolysis, probably effectuated by UreG. This chain is Urease accessory protein UreG, found in Agrobacterium fabrum (strain C58 / ATCC 33970) (Agrobacterium tumefaciens (strain C58)).